We begin with the raw amino-acid sequence, 187 residues long: High-affinity copper transporter ctrA2 (187 aa).

A run of 2 helical transmembrane segments spans residues Y44 to F64 and A137 to M157.

It belongs to the copper transporter (Ctr) (TC 1.A.56) family. SLC31A subfamily.

The protein resides in the cell membrane. The enzyme catalyses Cu(2+)(in) = Cu(2+)(out). Functionally, high-affinity copper transporter of plasma membrane that mediates copper uptake under low copper conditions. The mechanism driving the transmembrane transport of copper has still to be determined. Acts as a potential virulence factor. This Aspergillus fumigatus (strain ATCC MYA-4609 / CBS 101355 / FGSC A1100 / Af293) (Neosartorya fumigata) protein is High-affinity copper transporter ctrA2.